We begin with the raw amino-acid sequence, 461 residues long: Cysteine--tRNA ligase (461 aa).

Cys-28 provides a ligand contact to Zn(2+). Residues 30 to 40 (ITVYDLCHIGH) carry the 'HIGH' region motif. Zn(2+) contacts are provided by Cys-209, His-234, and Glu-238. Positions 266-270 (KMSKS) match the 'KMSKS' region motif. An ATP-binding site is contributed by Lys-269.

This sequence belongs to the class-I aminoacyl-tRNA synthetase family. In terms of assembly, monomer. Zn(2+) is required as a cofactor.

The protein resides in the cytoplasm. The enzyme catalyses tRNA(Cys) + L-cysteine + ATP = L-cysteinyl-tRNA(Cys) + AMP + diphosphate. In Shigella flexneri, this protein is Cysteine--tRNA ligase.